Reading from the N-terminus, the 194-residue chain is Adenylate kinase (194 aa).

10–15 contacts ATP; sequence GAGKGT. The tract at residues 30 to 59 is NMP; that stretch reads STGDMLRAAVAQQSEIGKRAKAVMDAGQLV. AMP contacts are provided by residues T31, R36, 57–59, 85–88, and Q92; these read QLV and GYPR. Residues 126-142 form an LID region; sequence SRVAETIAKGGQVRSDD. R127 provides a ligand contact to ATP. Residues R139 and R150 each contribute to the AMP site. A178 contributes to the ATP binding site.

It belongs to the adenylate kinase family. As to quaternary structure, monomer.

The protein localises to the cytoplasm. The enzyme catalyses AMP + ATP = 2 ADP. The protein operates within purine metabolism; AMP biosynthesis via salvage pathway; AMP from ADP: step 1/1. Catalyzes the reversible transfer of the terminal phosphate group between ATP and AMP. Plays an important role in cellular energy homeostasis and in adenine nucleotide metabolism. The polypeptide is Adenylate kinase (Brucella anthropi (strain ATCC 49188 / DSM 6882 / CCUG 24695 / JCM 21032 / LMG 3331 / NBRC 15819 / NCTC 12168 / Alc 37) (Ochrobactrum anthropi)).